Consider the following 127-residue polypeptide: MLSEFKAFIMRGNVLDLAVGVIIGGAFTGLVKSLTTNLIGPIIAFATGGTTDLDQLQLVITKTLTFKYGAFLNDVINFLITAFVVFLIVKFINRLFKANKQEEAKANPELEILTEIRDLLDAEKKAQ.

2 helical membrane-spanning segments follow: residues 14-34 (VLDL…VKSL) and 69-89 (GAFL…FLIV).

This sequence belongs to the MscL family. In terms of assembly, homopentamer.

The protein resides in the cell membrane. Its function is as follows. Channel that opens in response to stretch forces in the membrane lipid bilayer. May participate in the regulation of osmotic pressure changes within the cell. The protein is Large-conductance mechanosensitive channel of Leuconostoc mesenteroides subsp. mesenteroides (strain ATCC 8293 / DSM 20343 / BCRC 11652 / CCM 1803 / JCM 6124 / NCDO 523 / NBRC 100496 / NCIMB 8023 / NCTC 12954 / NRRL B-1118 / 37Y).